The following is a 429-amino-acid chain: Phosphoribosylamine--glycine ligase (429 aa).

Residues 109 to 316 (KDFLARHHIP…LVELCLAACD (208 aa)) enclose the ATP-grasp domain. 135–196 (LREKGAPIVV…EEFLDGEEAS (62 aa)) provides a ligand contact to ATP. Residues 209-231 (MATSQDHKRVGENDTGLNTGGMG) form a disordered region. The Mg(2+) site is built by E286 and N288.

The protein belongs to the GARS family. It depends on Mg(2+) as a cofactor. The cofactor is Mn(2+).

The catalysed reaction is 5-phospho-beta-D-ribosylamine + glycine + ATP = N(1)-(5-phospho-beta-D-ribosyl)glycinamide + ADP + phosphate + H(+). The protein operates within purine metabolism; IMP biosynthesis via de novo pathway; N(1)-(5-phospho-D-ribosyl)glycinamide from 5-phospho-alpha-D-ribose 1-diphosphate: step 2/2. This chain is Phosphoribosylamine--glycine ligase, found in Pasteurella multocida (strain Pm70).